We begin with the raw amino-acid sequence, 259 residues long: 3-oxo-5-alpha-steroid 4-dehydrogenase 1 (259 aa).

5 helical membrane-spanning segments follow: residues 12 to 29 (LLAA…AVFA), 86 to 106 (ILLA…PFLM), 111 to 131 (PMPL…GYLQ), 151 to 171 (FLIG…SDHI), and 209 to 229 (YALA…FCFL).

This sequence belongs to the steroid 5-alpha reductase family. In terms of tissue distribution, liver and prostate (at a low level).

The protein resides in the microsome membrane. The protein localises to the endoplasmic reticulum membrane. The enzyme catalyses a 3-oxo-5alpha-steroid + NADP(+) = a 3-oxo-Delta(4)-steroid + NADPH + H(+). It carries out the reaction androst-4-ene-3,17-dione + NADPH + H(+) = 5alpha-androstan-3,17-dione + NADP(+). The catalysed reaction is 5alpha-pregnane-3,20-dione + NADP(+) = progesterone + NADPH + H(+). It catalyses the reaction 17beta-hydroxy-5alpha-androstan-3-one + NADP(+) = testosterone + NADPH + H(+). In terms of biological role, converts testosterone into 5-alpha-dihydrotestosterone and progesterone or corticosterone into their corresponding 5-alpha-3-oxosteroids. It plays a central role in sexual differentiation and androgen physiology. The sequence is that of 3-oxo-5-alpha-steroid 4-dehydrogenase 1 from Homo sapiens (Human).